The following is a 387-amino-acid chain: G-protein coupled receptor homolog R33 (387 aa).

The Extracellular portion of the chain corresponds to 1–33 (MDVLLGTEELEDELHQLHFNYTCVPSLGLSVAR). Asn20 carries N-linked (GlcNAc...) asparagine; by host glycosylation. Residues 34-61 (DAETAVNFLIVLVGGPMNFLVLATQMLS) form a helical membrane-spanning segment. At 62–71 (NRSYSVSTPT) the chain is on the cytoplasmic side. Residues 72-94 (LYMTNLYLANLLTVATLPFLMLS) form a helical membrane-spanning segment. Residues 95–107 (NRGLVGSSPEGCK) lie on the Extracellular side of the membrane. The chain crosses the membrane as a helical span at residues 108–129 (IAALAYYATCTAGFATLMLIAI). The Cytoplasmic segment spans residues 130–150 (NRYRVIHQRTRSGAGSKRQTY). A helical membrane pass occupies residues 151 to 169 (AVLAVTWLASLMCASPAPL). At 170 to 204 (YATVMAHDSADALAFETCIIYFSYDQVKTVLATFK) the chain is on the extracellular side. The helical transmembrane segment at 205-224 (ILITMIWGITPVVMMSWFYV) threads the bilayer. At 225 to 244 (FFYRRLKLTSYRRRSQTLTF) the chain is on the cytoplasmic side. A helical membrane pass occupies residues 245–268 (VTTLMLSFLVVQTPFVAIMSYDSY). Over 269 to 285 (GVLNWPINCDTINKRDA) the chain is Extracellular. Residues 286 to 309 (VSMLARVVPNFHCLLNPVLYAFLG) traverse the membrane as a helical segment. Residues 310–387 (RDFNKRFILC…PPPPPPPPNC (78 aa)) lie on the Cytoplasmic side of the membrane. Residues 368–387 (RLRALGRPPPPPPPPPPPNC) are disordered. The segment covering 374–387 (RPPPPPPPPPPPNC) has biased composition (pro residues).

Belongs to the G-protein coupled receptor 1 family.

It is found in the host cell membrane. Its function is as follows. Plays an important role in vivo, in particular in the dissemination to or replication in the salivary gland. The chain is G-protein coupled receptor homolog R33 from Rattus.